Consider the following 425-residue polypeptide: [Pyruvate dehydrogenase (acetyl-transferring)] kinase, mitochondrial (425 aa).

His178 carries the post-translational modification Phosphohistidine; by autocatalysis. The 239-residue stretch at 180–418 folds into the Histidine kinase domain; sequence NVAVEIALDI…DVYIHLNRLC (239 aa). Residues 296–303, Asp336, 355–356, and 379–384 each bind ATP; these read EILKNSLR, TT, and GFGFGL.

The protein belongs to the PDK/BCKDK protein kinase family.

It localises to the mitochondrion matrix. The enzyme catalyses L-seryl-[pyruvate dehydrogenase E1 alpha subunit] + ATP = O-phospho-L-seryl-[pyruvate dehydrogenase E1 alpha subunit] + ADP + H(+). Functionally, inhibits the mitochondrial pyruvate dehydrogenase complex by phosphorylation of the E1 alpha subunit, thus contributing to the regulation of glucose metabolism. This Schizosaccharomyces pombe (strain 972 / ATCC 24843) (Fission yeast) protein is [Pyruvate dehydrogenase (acetyl-transferring)] kinase, mitochondrial (pkp1).